The sequence spans 143 residues: Glycine cleavage system H protein 1 (143 aa).

In terms of domain architecture, Lipoyl-binding spans 26–107 (IYSVGMASIL…PYSSWIAKLK (82 aa)). Residue K67 is modified to N6-lipoyllysine.

The protein belongs to the GcvH family. As to quaternary structure, the glycine cleavage system is composed of four proteins: P, T, L and H. (R)-lipoate is required as a cofactor.

In terms of biological role, the glycine cleavage system catalyzes the degradation of glycine. The H protein shuttles the methylamine group of glycine from the P protein to the T protein. The polypeptide is Glycine cleavage system H protein 1 (Aquifex aeolicus (strain VF5)).